Consider the following 170-residue polypeptide: Cathelicidin antimicrobial peptide (170 aa).

A signal peptide spans 1–30 (MKTQRDSPSLGRWSLVLLLLGLVMPLAIVA). Positions 31–131 (QVLSYQEAVL…DISCDKDNRR (101 aa)) are cleaved as a propeptide — cathelin-like domain (CLD). 2 cysteine pairs are disulfide-bonded: cysteine 86–cysteine 97 and cysteine 108–cysteine 125. An active core region spans residues 150-162 (LKKVGQKIKDFLG).

It belongs to the cathelicidin family. As to quaternary structure, monomer, homodimer or homotrimer (in vitro). Oligomerizes as tetra- or hexamer in solution (in vitro). Post-translationally, proteolytically cleaved by proteinase PRTN3 into antibacterial peptide LL-37. Proteolytically cleaved by cathepsin CTSG and neutrophil elastase ELANE. Resistant to proteolytic degradation in solution, and when bound to both zwitterionic (mimicking mammalian membranes) and negatively charged membranes (mimicking bacterial membranes). In terms of processing, after secretion onto the skin surface, the CAMP gene product is processed by a serine protease-dependent mechanism into multiple novel antimicrobial peptides distinct from and shorter than cathelicidin LL-37. These peptides show enhanced antimicrobial action, acquiring the ability to kill skin pathogens such as S.aureus, E.coli and C.albicans. These peptides have lost the ability to stimulate CXCL8/IL8 release from keratinocytes. The peptides act synergistically, killing bacteria at lower concentrations when present together, and maintain activity at increased salt condition.

It is found in the secreted. The protein localises to the vesicle. Its function is as follows. Antimicrobial protein that is an integral component of the innate immune system. Binds to bacterial lipopolysaccharides (LPS). Acts via neutrophil N-formyl peptide receptors to enhance the release of CXCL2. Postsecretory processing generates multiple cathelicidin antimicrobial peptides with various lengths which act as a topical antimicrobial defense in sweat on skin. The unprocessed precursor form, cathelicidin antimicrobial peptide, inhibits the growth of Gram-negative E.coli and E.aerogenes with efficiencies comparable to that of the mature peptide LL-37 (in vitro). Antimicrobial peptide that is an integral component of the innate immune system. Binds to bacterial lipopolysaccharides (LPS). Causes membrane permeabilization by forming transmembrane pores (in vitro). Causes lysis of E.coli. Exhibits antimicrobial activity against Gram-negative bacteria such as P.aeruginosa, S.typhimurium, E.aerogenes, E.coli and P.syringae, Gram-positive bacteria such as L.monocytogenes, S.epidermidis, S.pyogenes and S.aureus, as well as vancomycin-resistant enterococci (in vitro). Exhibits antimicrobial activity against methicillin-resistant S.aureus, P.mirabilis, and C.albicans in low-salt media, but not in media containing 100 mM NaCl (in vitro). Forms chiral supramolecular assemblies with quinolone signal (PQS) molecules of P.aeruginosa, which may lead to interference of bacterial quorum signaling and perturbance of bacterial biofilm formation. May form supramolecular fiber-like assemblies on bacterial membranes. Induces cytokine and chemokine producation as well as TNF/TNFA and CSF2/GMCSF production in normal human keratinocytes. Exhibits hemolytic activity against red blood cells. Functionally, exhibits antimicrobial activity against E.coli and B.megaterium (in vitro). In Papio papio (Guinea baboon), this protein is Cathelicidin antimicrobial peptide.